Here is a 358-residue protein sequence, read N- to C-terminus: Hsp70/Hsp90 co-chaperone cns1 (358 aa).

TPR repeat units follow at residues 64-97, 102-135, 136-169, and 221-255; these read AQNF…KCGD, IACY…DSTH, AKAY…HPND, and TEHP…YPLV.

This sequence belongs to the TTC4 family. As to quaternary structure, monomer. Component of Hsp70 and Hsp90 chaperone complexes.

The protein localises to the cytoplasm. It localises to the nucleus. In terms of biological role, co-chaperone that binds to the molecular chaperones Hsp90 and Hsp70. Stimulates Hsp70 ATPase activity, but not Hsp90 ATPase activity. Involved in only a subset of Hsp90 functions. The protein is Hsp70/Hsp90 co-chaperone cns1 (cns1) of Schizosaccharomyces pombe (strain 972 / ATCC 24843) (Fission yeast).